The following is a 274-amino-acid chain: 4-deoxy-L-threo-5-hexosulose-uronate ketol-isomerase (274 aa).

Residues His-192, His-194, Glu-199, and His-241 each contribute to the Zn(2+) site.

It belongs to the KduI family. Zn(2+) serves as cofactor.

The catalysed reaction is 5-dehydro-4-deoxy-D-glucuronate = 3-deoxy-D-glycero-2,5-hexodiulosonate. The protein operates within glycan metabolism; pectin degradation; 2-dehydro-3-deoxy-D-gluconate from pectin: step 4/5. In terms of biological role, catalyzes the isomerization of 5-dehydro-4-deoxy-D-glucuronate to 3-deoxy-D-glycero-2,5-hexodiulosonate. The protein is 4-deoxy-L-threo-5-hexosulose-uronate ketol-isomerase of Cereibacter sphaeroides (strain ATCC 17025 / ATH 2.4.3) (Rhodobacter sphaeroides).